Consider the following 165-residue polypeptide: Chorismate pyruvate-lyase (165 aa).

Residues M35, R77, L115, and E156 each contribute to the substrate site.

The protein belongs to the UbiC family. As to quaternary structure, monomer.

It is found in the cytoplasm. It carries out the reaction chorismate = 4-hydroxybenzoate + pyruvate. The protein operates within cofactor biosynthesis; ubiquinone biosynthesis. Removes the pyruvyl group from chorismate, with concomitant aromatization of the ring, to provide 4-hydroxybenzoate (4HB) for the ubiquinone pathway. In Salmonella enteritidis PT4 (strain P125109), this protein is Chorismate pyruvate-lyase.